Reading from the N-terminus, the 114-residue chain is Evasin P1096 (114 aa).

The first 23 residues, 1–23 (MELNAFTILHIAVFIAVGYYANT), serve as a signal peptide directing secretion. 3 disulfides stabilise this stretch: cysteine 47–cysteine 65, cysteine 51–cysteine 67, and cysteine 61–cysteine 78. Asparagine 50 carries N-linked (GlcNAc...) asparagine glycosylation. Residues 89–114 (DPSQDPSIDEAAPRESVSKRRSNGES) form a disordered region. Basic and acidic residues predominate over residues 99–114 (AAPRESVSKRRSNGES).

It localises to the secreted. Functionally, salivary chemokine-binding protein which binds to host chemokine CXCL8. The sequence is that of Evasin P1096 from Ixodes ricinus (Common tick).